Reading from the N-terminus, the 297-residue chain is Homoserine kinase (297 aa).

84–94 (PLSKGFGSSAA) is an ATP binding site.

Belongs to the GHMP kinase family. Homoserine kinase subfamily.

The protein localises to the cytoplasm. It carries out the reaction L-homoserine + ATP = O-phospho-L-homoserine + ADP + H(+). It functions in the pathway amino-acid biosynthesis; L-threonine biosynthesis; L-threonine from L-aspartate: step 4/5. In terms of biological role, catalyzes the ATP-dependent phosphorylation of L-homoserine to L-homoserine phosphate. The polypeptide is Homoserine kinase (Shouchella clausii (strain KSM-K16) (Alkalihalobacillus clausii)).